A 455-amino-acid chain; its full sequence is GTPase Der (455 aa).

2 consecutive EngA-type G domains span residues 4–169 (PVVA…PPKD) and 178–353 (IQMS…EQHR). Residues 10–17 (GRPNVGKS), 57–61 (DTGGL), 120–123 (NKCE), 184–191 (GRPNVGKS), 231–235 (DTAGI), and 296–299 (NKWD) each bind GTP. The 86-residue stretch at 354–439 (RRVTTSVVNE…PLKLFWRGKQ (86 aa)) folds into the KH-like domain.

It belongs to the TRAFAC class TrmE-Era-EngA-EngB-Septin-like GTPase superfamily. EngA (Der) GTPase family. In terms of assembly, associates with the 50S ribosomal subunit.

Its function is as follows. GTPase that plays an essential role in the late steps of ribosome biogenesis. This Synechococcus sp. (strain CC9902) protein is GTPase Der.